The following is a 432-amino-acid chain: Adenylosuccinate lyase (432 aa).

Residues 4-5 (RY), 67-69 (RHD), and 93-94 (TS) contribute to the N(6)-(1,2-dicarboxyethyl)-AMP site. The Proton donor/acceptor role is filled by H141. Residue Q212 coordinates N(6)-(1,2-dicarboxyethyl)-AMP. Catalysis depends on S262, which acts as the Proton donor/acceptor. Residues S263, 268–270 (KRN), N276, and 307–311 (SAERI) contribute to the N(6)-(1,2-dicarboxyethyl)-AMP site.

Belongs to the lyase 1 family. Adenylosuccinate lyase subfamily. As to quaternary structure, homodimer and homotetramer. Residues from neighboring subunits contribute catalytic and substrate-binding residues to each active site.

It carries out the reaction N(6)-(1,2-dicarboxyethyl)-AMP = fumarate + AMP. The enzyme catalyses (2S)-2-[5-amino-1-(5-phospho-beta-D-ribosyl)imidazole-4-carboxamido]succinate = 5-amino-1-(5-phospho-beta-D-ribosyl)imidazole-4-carboxamide + fumarate. Its pathway is purine metabolism; AMP biosynthesis via de novo pathway; AMP from IMP: step 2/2. It participates in purine metabolism; IMP biosynthesis via de novo pathway; 5-amino-1-(5-phospho-D-ribosyl)imidazole-4-carboxamide from 5-amino-1-(5-phospho-D-ribosyl)imidazole-4-carboxylate: step 2/2. Catalyzes two reactions in de novo purine nucleotide biosynthesis. Catalyzes the breakdown of 5-aminoimidazole- (N-succinylocarboxamide) ribotide (SAICAR or 2-[5-amino-1-(5-phospho-beta-D-ribosyl)imidazole-4-carboxamido]succinate) to 5-aminoimidazole-4-carboxamide ribotide (AICAR or 5-amino-1-(5-phospho-beta-D-ribosyl)imidazole-4-carboxamide) and fumarate, and of adenylosuccinate (ADS or N(6)-(1,2-dicarboxyethyl)-AMP) to adenosine monophosphate (AMP) and fumarate. This Streptococcus mutans serotype c (strain ATCC 700610 / UA159) protein is Adenylosuccinate lyase (purB).